The primary structure comprises 216 residues: MPMYGDLGNKLVQHAKRTQNLSHLPPYQTELVRAVAREIRDLDKDVASLLEPFQGSFDPSAEQATACTLLVNHLSMRRNKRCLLAYHRIRTDKLEELVWNGADILDLAGQTTGGPKGVTEGNEGGGTTSSLSPQEEDYFRQFGDLLALYKGQWTDIDLTGSLEPPRDLFIDVRVLKDAGEIQTEYGAINLTKNSQFYVRQGDVERLIVQGYLQKLG.

Residues 110–133 (QTTGGPKGVTEGNEGGGTTSSLSP) are disordered. Positions 111-127 (TTGGPKGVTEGNEGGGT) are enriched in gly residues.

The protein belongs to the GINS1/PSF1 family. In terms of assembly, component of the GINS complex which is a heterotetramer of div-26/sld5, drc-1/psf1, drc-2/psf2 and drc-3/psf3.

Its subcellular location is the nucleus. Its function is as follows. The GINS complex plays an essential role in the initiation of DNA replication. The polypeptide is DNA replication complex GINS protein psf1 (drc-1) (Neurospora crassa (strain ATCC 24698 / 74-OR23-1A / CBS 708.71 / DSM 1257 / FGSC 987)).